The chain runs to 543 residues: MNSNTPSSDNSSPDNVSPDTSDMASAGDDSALATPPPRPSLWKDMTTNEDWWAIWCAALLLLIAFAAVWIGQPENLSELIAGSTMEEVSQVETAPENAGPSAEAENEAIETENTAPAENADLEVAETQEVAEEEPYEYASPLKPFLAKPGKWTANPLDAISSSWSGILGVFLIIAALFAFANQMRGKSAGAFLAAFPVIFLLATLAYWMSGQSVVKAYNLEYALWALLVGLIISNTVGTPDFLRPAISTEFYIKTGLVLLGAEVLMSRLLALGLPGVFVAWLVTPVVLITTYWFGQKVLKIQSKSLNMVISADMSVCGVSAAIATAAACKAKKEELSLSIGLSLGFTVIMMAVMPAVITAMGIDPILGGAWLGGTIDSTGAVAAAGAVLGDEALEVAATVKMIQNILIGVTAFCVAIYWVTFVERDPAGPRIGISEIWYRFPKFVLGFVSMSILFSILYSYMTNGPELINAMIGGSTKTLRGWFFCLAFVSIGLETNFRQLLPQLKGGKPLVLYVCGQSLNLVLTLVMAYLMFKVVFADTVAP.

Residues 1–22 (MNSNTPSSDNSSPDNVSPDTSD) show a composition bias toward low complexity. Positions 1–41 (MNSNTPSSDNSSPDNVSPDTSDMASAGDDSALATPPPRPSL) are disordered. The helical transmembrane segment at 51 to 73 (WWAIWCAALLLLIAFAAVWIGQP) threads the bilayer. The tract at residues 91 to 120 (VETAPENAGPSAEAENEAIETENTAPAENA) is disordered. A run of 11 helical transmembrane segments spans residues 160-182 (ISSS…AFAN), 189-211 (AGAF…WMSG), 221-243 (EYAL…PDFL), 270-292 (LALG…ITTY), 307-329 (NMVI…AAAC), 336-358 (LSLS…PAVI), 368-390 (GGAW…AVLG), 403-422 (IQNI…WVTF), 437-459 (IWYR…SILY), 479-496 (TLRG…GLET), and 511-533 (LVLY…YLMF).

The protein belongs to the UPF0324 family.

It localises to the cell membrane. This Rhodopirellula baltica (strain DSM 10527 / NCIMB 13988 / SH1) protein is UPF0324 membrane protein RB9488.